Reading from the N-terminus, the 359-residue chain is Fructose-bisphosphate aldolase (359 aa).

D-glyceraldehyde 3-phosphate is bound at residue Ser-50. Asp-83 acts as the Proton donor in catalysis. Zn(2+) is bound by residues His-84, Asp-105, Glu-142, and His-198. Position 199 (Gly-199) interacts with dihydroxyacetone phosphate. His-232 contributes to the Zn(2+) binding site. Dihydroxyacetone phosphate is bound by residues 233–235 (GSS) and 275–278 (NIDT).

The protein belongs to the class II fructose-bisphosphate aldolase family. Homodimer. Zn(2+) serves as cofactor.

It catalyses the reaction beta-D-fructose 1,6-bisphosphate = D-glyceraldehyde 3-phosphate + dihydroxyacetone phosphate. It participates in carbohydrate biosynthesis; Calvin cycle. It functions in the pathway carbohydrate degradation; glycolysis; D-glyceraldehyde 3-phosphate and glycerone phosphate from D-glucose: step 4/4. Catalyzes the aldol condensation of dihydroxyacetone phosphate (DHAP or glycerone-phosphate) with glyceraldehyde 3-phosphate (G3P) to form fructose 1,6-bisphosphate (FBP) in gluconeogenesis and the reverse reaction in glycolysis. The chain is Fructose-bisphosphate aldolase (cbbA) from Sinorhizobium medicae (strain WSM419) (Ensifer medicae).